A 413-amino-acid chain; its full sequence is CinA-like protein (413 aa).

It belongs to the CinA family.

In Geobacter metallireducens (strain ATCC 53774 / DSM 7210 / GS-15), this protein is CinA-like protein.